The sequence spans 333 residues: Cell shape-determining protein Mbl (333 aa).

ATP-binding positions include 12 to 14 (TAN), 156 to 158 (GGT), 204 to 207 (EDIK), and 284 to 287 (GGAL).

The protein belongs to the FtsA/MreB family. Forms polymers.

The protein localises to the cytoplasm. In terms of biological role, forms membrane-associated dynamic filaments that are essential for cell shape determination. Acts by regulating cell wall synthesis and cell elongation, and thus cell shape. A feedback loop between cell geometry and Mbl localization may maintain elongated cell shape by targeting cell wall growth to regions of negative cell wall curvature. The sequence is that of Cell shape-determining protein Mbl from Bacillus cereus (strain ATCC 10987 / NRS 248).